The sequence spans 610 residues: Elongation factor 4 (610 aa).

Residues 13–195 (SHIRNFSIVA…AIVNRLPAPK (183 aa)) form the tr-type G domain. GTP contacts are provided by residues 25–30 (DHGKST) and 142–145 (NKID).

The protein belongs to the TRAFAC class translation factor GTPase superfamily. Classic translation factor GTPase family. LepA subfamily.

It is found in the cell inner membrane. The enzyme catalyses GTP + H2O = GDP + phosphate + H(+). In terms of biological role, required for accurate and efficient protein synthesis under certain stress conditions. May act as a fidelity factor of the translation reaction, by catalyzing a one-codon backward translocation of tRNAs on improperly translocated ribosomes. Back-translocation proceeds from a post-translocation (POST) complex to a pre-translocation (PRE) complex, thus giving elongation factor G a second chance to translocate the tRNAs correctly. Binds to ribosomes in a GTP-dependent manner. The protein is Elongation factor 4 of Rhizobium leguminosarum bv. trifolii (strain WSM2304).